A 351-amino-acid polypeptide reads, in one-letter code: Rab9 effector protein with kelch motifs (351 aa).

Kelch repeat units lie at residues 54–102, 105–156, 162–210, 214–263, 264–313, and 328–351; these read KIVI…PESE, SLWV…TNSA, LFVF…VITA, DIYI…TFNK, NIFI…LLPW, and LCFV…TVLT.

Rab9 effector required for endosome to trans-Golgi network (TGN) transport. This Danio rerio (Zebrafish) protein is Rab9 effector protein with kelch motifs (rabepk).